A 353-amino-acid chain; its full sequence is Pleckstrin-2 (353 aa).

The residue at position 1 (methionine 1) is an N-acetylmethionine. The 101-residue stretch at 4–104 folds into the PH 1 domain; it reads GVLKEGFLVK…WAFEITGAIH (101 aa). A Phosphoserine modification is found at serine 120. The region spanning 139-225 is the DEP domain; that stretch reads TSTGIRPSPN…DSTALYTFAE (87 aa). A PH 2 domain is found at 247-353; the sequence is TVVKQGYLSK…EWIEAIKKLT (107 aa).

In terms of tissue distribution, ubiquitous. Most abundant in the thymus, large bowel, small bowel, stomach, and prostate.

The protein resides in the cell projection. The protein localises to the lamellipodium membrane. It localises to the cytoplasm. Its subcellular location is the cytoskeleton. May help orchestrate cytoskeletal arrangement. Contribute to lamellipodia formation. Overexpression of pleckstrin 2 causes large lamellipodia and peripheral ruffle formation. The sequence is that of Pleckstrin-2 (Plek2) from Mus musculus (Mouse).